We begin with the raw amino-acid sequence, 263 residues long: Receptor-transporting protein 1 (263 aa).

The Cytoplasmic segment spans residues 1–238 (MRIFRPWRLR…QTGSGWNFCS (238 aa)). Residues 88 to 197 (ASGRFHCSWC…GEFCEACQEG (110 aa)) form a 3CxxC-type zinc finger. Residues 239–259 (IPWCLFWATVLLLIIYLQFSF) form a helical membrane-spanning segment. The Extracellular portion of the chain corresponds to 260–263 (RSSV).

The protein belongs to the TMEM7 family. As to quaternary structure, interacts with olfactory receptors. In terms of tissue distribution, expressed in testis.

It is found in the cell membrane. In terms of biological role, specifically promotes functional cell surface expression of olfactory receptors, but not of other GPCRs. In Homo sapiens (Human), this protein is Receptor-transporting protein 1 (RTP1).